Consider the following 438-residue polypeptide: Hydrogenobyrinate a,c-diamide synthase (438 aa).

Residues 247-438 (RIALAEDAAF…TFFHAIAKGG (192 aa)) enclose the GATase cobBQ-type domain. Cysteine 329 (nucleophile) is an active-site residue.

This sequence belongs to the CobB/CbiA family. Requires Mg(2+) as cofactor.

It carries out the reaction hydrogenobyrinate + 2 L-glutamine + 2 ATP + 2 H2O = hydrogenobyrinate a,c-diamide + 2 L-glutamate + 2 ADP + 2 phosphate + 2 H(+). It functions in the pathway cofactor biosynthesis; adenosylcobalamin biosynthesis; cob(II)yrinate a,c-diamide from precorrin-2 (aerobic route): step 9/10. Catalyzes the ATP-dependent amidation of the two carboxylate groups at positions a and c of hydrogenobyrinate, using either L-glutamine or ammonia as the nitrogen source. The chain is Hydrogenobyrinate a,c-diamide synthase from Agrobacterium fabrum (strain C58 / ATCC 33970) (Agrobacterium tumefaciens (strain C58)).